The primary structure comprises 408 residues: Probable pectate lyase 5 (408 aa).

A signal peptide spans 1-27; the sequence is MRMTLVHLSLSLFSCLLLVLSPTFIAS. Asparagine 45 carries N-linked (GlcNAc...) asparagine glycosylation. 3 residues coordinate Ca(2+): aspartate 206, aspartate 230, and aspartate 234. Arginine 286 is a catalytic residue.

It belongs to the polysaccharide lyase 1 family. The cofactor is Ca(2+).

It carries out the reaction Eliminative cleavage of (1-&gt;4)-alpha-D-galacturonan to give oligosaccharides with 4-deoxy-alpha-D-galact-4-enuronosyl groups at their non-reducing ends.. It participates in glycan metabolism; pectin degradation; 2-dehydro-3-deoxy-D-gluconate from pectin: step 2/5. This is Probable pectate lyase 5 from Arabidopsis thaliana (Mouse-ear cress).